The chain runs to 627 residues: Phosphomethylpyrimidine synthase (627 aa).

A compositionally biased stretch (polar residues) spans 1–21; that stretch reads MSAQQQKNLSESAQVDQQSVQ. A disordered region spans residues 1–32; the sequence is MSAQQQKNLSESAQVDQQSVQPFPRSQKVYVQ. Substrate is bound by residues N231, M260, Y289, H325, 345-347, 386-389, and E425; these read SRG and DGLR. H429 serves as a coordination point for Zn(2+). Y452 contributes to the substrate binding site. H493 lines the Zn(2+) pocket. [4Fe-4S] cluster is bound by residues C573, C576, and C581.

This sequence belongs to the ThiC family. Homodimer. [4Fe-4S] cluster serves as cofactor.

The catalysed reaction is 5-amino-1-(5-phospho-beta-D-ribosyl)imidazole + S-adenosyl-L-methionine = 4-amino-2-methyl-5-(phosphooxymethyl)pyrimidine + CO + 5'-deoxyadenosine + formate + L-methionine + 3 H(+). The protein operates within cofactor biosynthesis; thiamine diphosphate biosynthesis. In terms of biological role, catalyzes the synthesis of the hydroxymethylpyrimidine phosphate (HMP-P) moiety of thiamine from aminoimidazole ribotide (AIR) in a radical S-adenosyl-L-methionine (SAM)-dependent reaction. This Ectopseudomonas mendocina (strain ymp) (Pseudomonas mendocina) protein is Phosphomethylpyrimidine synthase.